Here is a 620-residue protein sequence, read N- to C-terminus: Translocator protein BipB (620 aa).

Residues 58–95 form a disordered region; that stretch reads QCDAQPAAHDARLDDRPALRAPQERDAPPLGASDTGSR. Basic and acidic residues predominate over residues 66–84; that stretch reads HDARLDDRPALRAPQERDA. A coiled-coil region spans residues 309 to 339; the sequence is EMQAKREAELQKKSDEYQAQVKKAEEMQKTM. Helical transmembrane passes span 355–375, 401–421, and 430–450; these read FAAAAFTGGASLALAAVGLAL, AILKPLMEMISSLITKALVAC, and LAGAILGAVVTGVALVAAAFV.

The protein belongs to the SctE/SipB/YopB family.

The protein resides in the secreted. It is found in the host membrane. In terms of biological role, plays a role in the bacterium-induced formation of multinucleated giant cell (MNGC), which is formed after host cell fusion, as well as in the intercellular spreading of bacteria and in the induction of apoptosis in macrophages. May act in concert with other effector proteins to induce fusion of host cell membranes. The polypeptide is Translocator protein BipB (bipB) (Burkholderia mallei (strain NCTC 10247)).